Here is a 116-residue protein sequence, read N- to C-terminus: Biogenesis of lysosome-related organelles complex 1 subunit CNL1 (116 aa).

The stretch at 63-95 (DIVDVNIQSFKDILSKCEELENYFTMLDQIEMI) forms a coiled coil.

This sequence belongs to the BLOC1S4 family. In terms of assembly, component of the biogenesis of lysosome-related organelles complex-1 (BLOC-1).

The protein localises to the cytoplasm. In terms of biological role, component of the biogenesis of lysosome-related organelles complex-1 (BLOC-1), a complex that is involved in endosomal cargo sorting. In Vanderwaltozyma polyspora (strain ATCC 22028 / DSM 70294 / BCRC 21397 / CBS 2163 / NBRC 10782 / NRRL Y-8283 / UCD 57-17) (Kluyveromyces polysporus), this protein is Biogenesis of lysosome-related organelles complex 1 subunit CNL1 (CLN1).